Here is a 361-residue protein sequence, read N- to C-terminus: Aromatic amino acid aminotransferase (361 aa).

Lysine 215 carries the N6-(pyridoxal phosphate)lysine modification.

It belongs to the class-II pyridoxal-phosphate-dependent aminotransferase family. As to quaternary structure, homodimer. Pyridoxal 5'-phosphate serves as cofactor.

It carries out the reaction an aromatic L-alpha-amino acid + 2-oxoglutarate = an aromatic oxo-acid + L-glutamate. Its function is as follows. Aminotransferase that catalyzes the conversion of aromatic amino acids and 2-oxoglutarate into corresponding aromatic oxo acids and L-glutamate. The polypeptide is Aromatic amino acid aminotransferase (Mycolicibacterium smegmatis (strain ATCC 700084 / mc(2)155) (Mycobacterium smegmatis)).